Here is a 322-residue protein sequence, read N- to C-terminus: MSKKNYYLLSEGILKRKENTIYFVNEKGSKPLPINKIYSMYAYGQITISSQVISLFAKEGIPIHFFNYYGYYNGSFYPRESLLSGDLLIKQAEHNIDFSKRLKLAKLFVEGAAKNILKVLAYYKIENNIKNTLTELNESSKITEVMNVEGRIRAEYYQYFDDILPDEFKMEGRSRQPPTNMINSLISFGNSMMYASVITELYNTQLNPTISYLHEPAERRFSLALDLSEIFKPIIVDRVIFYLVNKKMITEKDFNQDLNCCLLNDKGRATFVKEYNKRLETTIKHKDLGRKVSYQRLIRLEAYKLKKHVFGMKEYDPFVIWW.

Positions 149, 214, and 229 each coordinate Mn(2+).

The protein belongs to the CRISPR-associated endonuclease Cas1 family. As to quaternary structure, homodimer, forms a heterotetramer with a Cas2 homodimer. Requires Mg(2+) as cofactor. It depends on Mn(2+) as a cofactor.

Functionally, CRISPR (clustered regularly interspaced short palindromic repeat), is an adaptive immune system that provides protection against mobile genetic elements (viruses, transposable elements and conjugative plasmids). CRISPR clusters contain spacers, sequences complementary to antecedent mobile elements, and target invading nucleic acids. CRISPR clusters are transcribed and processed into CRISPR RNA (crRNA). Acts as a dsDNA endonuclease. Involved in the integration of spacer DNA into the CRISPR cassette. This Methanobrevibacter ruminantium (strain ATCC 35063 / DSM 1093 / JCM 13430 / OCM 146 / M1) (Methanobacterium ruminantium) protein is CRISPR-associated protein Cas1 1.